The sequence spans 182 residues: Large ribosomal subunit protein uL13 (182 aa).

This sequence belongs to the universal ribosomal protein uL13 family. In terms of assembly, part of the 50S ribosomal subunit.

In terms of biological role, this protein is one of the early assembly proteins of the 50S ribosomal subunit, although it is not seen to bind rRNA by itself. It is important during the early stages of 50S assembly. This Pyrobaculum neutrophilum (strain DSM 2338 / JCM 9278 / NBRC 100436 / V24Sta) (Thermoproteus neutrophilus) protein is Large ribosomal subunit protein uL13.